A 193-amino-acid chain; its full sequence is dCTP deaminase, dUMP-forming (193 aa).

DCTP-binding positions include 101–106, Asp-119, 127–129, Gln-148, Tyr-162, and Gln-174; these read KSSLGR and TLE. Glu-129 (proton donor/acceptor) is an active-site residue. The tract at residues 160–193 is disordered; it reads TPYGSGSLGSKYQGQRGPTPSKGYLNFSSEQDSD. Positions 167-177 are enriched in polar residues; sequence LGSKYQGQRGP.

The protein belongs to the dCTP deaminase family. As to quaternary structure, homotrimer.

It carries out the reaction dCTP + 2 H2O = dUMP + NH4(+) + diphosphate. It participates in pyrimidine metabolism; dUMP biosynthesis; dUMP from dCTP: step 1/1. Bifunctional enzyme that catalyzes both the deamination of dCTP to dUTP and the hydrolysis of dUTP to dUMP without releasing the toxic dUTP intermediate. This Corynebacterium efficiens (strain DSM 44549 / YS-314 / AJ 12310 / JCM 11189 / NBRC 100395) protein is dCTP deaminase, dUMP-forming.